The chain runs to 228 residues: Mediator of RNA polymerase II transcription subunit 7-A (228 aa).

It belongs to the Mediator complex subunit 7 family. In terms of assembly, component of the Mediator complex.

It localises to the nucleus. Its function is as follows. Component of the Mediator complex, a coactivator involved in the regulated transcription of nearly all RNA polymerase II-dependent genes. Mediator functions as a bridge to convey information from gene-specific regulatory proteins to the basal RNA polymerase II transcription machinery. Mediator is recruited to promoters by direct interactions with regulatory proteins and serves as a scaffold for the assembly of a functional preinitiation complex with RNA polymerase II and the general transcription factors. The protein is Mediator of RNA polymerase II transcription subunit 7-A (med7-a) of Xenopus laevis (African clawed frog).